Here is a 50-residue protein sequence, read N- to C-terminus: Putative protein HokG (50 aa).

A helical membrane pass occupies residues 5–25; sequence YALVAIIVLCCTVLGFTLMVG.

This sequence belongs to the Hok/Gef family.

It is found in the cell inner membrane. Its function is as follows. Toxic component of a type I toxin-antitoxin (TA) system. When overexpressed kills cells within minutes; causes collapse of the transmembrane potential and arrest of respiration. Its toxic effect is probably neutralized by an antisense antitoxin Sok RNA. The polypeptide is Putative protein HokG (hokG) (Escherichia coli O157:H7).